We begin with the raw amino-acid sequence, 174 residues long: Protein-lysine myristoyltransferase HlyC (174 aa).

Active-site residues include H23 and D92. Heme is bound at residue H151.

This sequence belongs to the RTX toxin acyltransferase family. In terms of assembly, monomer. In terms of processing, proteolytically cleaved by the protease systems ClpAP, ClpXP and FtsH, leading to its degradation.

Its subcellular location is the cytoplasm. It carries out the reaction tetradecanoyl-[ACP] + L-lysyl-[protein] = N(6)-tetradecanoyl-L-lysyl-[protein] + holo-[ACP] + H(+). With respect to regulation, the acyltransferase activity is inhibited by heme. Protein-lysine myristoyltransferase that catalyzes myristoylation of the protoxin (HlyA) at two internal lysine residues, thereby converting it to the active toxin. The polypeptide is Protein-lysine myristoyltransferase HlyC (Escherichia coli).